The primary structure comprises 234 residues: UPF0173 metal-dependent hydrolase RHE_CH01853 (234 aa).

It belongs to the UPF0173 family.

This is UPF0173 metal-dependent hydrolase RHE_CH01853 from Rhizobium etli (strain ATCC 51251 / DSM 11541 / JCM 21823 / NBRC 15573 / CFN 42).